We begin with the raw amino-acid sequence, 427 residues long: Serine--tRNA ligase (427 aa).

Position 231–233 (231–233 (TAE)) interacts with L-serine. Residue 262–264 (RSE) coordinates ATP. An L-serine-binding site is contributed by Glu285. ATP is bound at residue 349 to 352 (EISS). Ser385 is a binding site for L-serine.

Belongs to the class-II aminoacyl-tRNA synthetase family. Type-1 seryl-tRNA synthetase subfamily. As to quaternary structure, homodimer. The tRNA molecule binds across the dimer.

The protein localises to the cytoplasm. It carries out the reaction tRNA(Ser) + L-serine + ATP = L-seryl-tRNA(Ser) + AMP + diphosphate + H(+). The catalysed reaction is tRNA(Sec) + L-serine + ATP = L-seryl-tRNA(Sec) + AMP + diphosphate + H(+). It participates in aminoacyl-tRNA biosynthesis; selenocysteinyl-tRNA(Sec) biosynthesis; L-seryl-tRNA(Sec) from L-serine and tRNA(Sec): step 1/1. In terms of biological role, catalyzes the attachment of serine to tRNA(Ser). Is also able to aminoacylate tRNA(Sec) with serine, to form the misacylated tRNA L-seryl-tRNA(Sec), which will be further converted into selenocysteinyl-tRNA(Sec). This Rhizobium johnstonii (strain DSM 114642 / LMG 32736 / 3841) (Rhizobium leguminosarum bv. viciae) protein is Serine--tRNA ligase.